The following is a 315-amino-acid chain: Putative HTH-type transcriptional regulatory protein PH1808 (315 aa).

Positions 131–189 (LKALREEHGYSITELAGILGISRKSLQRYEKGESVVSLEVALRLEEVFDEPLVKPIDVL) constitute an HTH cro/C1-type domain. Residues 142–161 (ITELAGILGISRKSLQRYEK) constitute a DNA-binding region (H-T-H motif).

The protein is Putative HTH-type transcriptional regulatory protein PH1808 of Pyrococcus horikoshii (strain ATCC 700860 / DSM 12428 / JCM 9974 / NBRC 100139 / OT-3).